Here is a 1495-residue protein sequence, read N- to C-terminus: DNA-directed RNA polymerase subunit 1 (1495 aa).

It belongs to the RNA polymerase beta' chain family.

It localises to the virion. The catalysed reaction is RNA(n) + a ribonucleoside 5'-triphosphate = RNA(n+1) + diphosphate. Its function is as follows. DNA-dependent RNA polymerase catalyzes the transcription of DNA into RNA using the four ribonucleoside triphosphates as substrates. This Acanthamoeba polyphaga (Amoeba) protein is DNA-directed RNA polymerase subunit 1 (RPO1).